The following is a 104-amino-acid chain: Urease subunit beta (104 aa).

The protein belongs to the urease beta subunit family. In terms of assembly, heterotrimer of UreA (gamma), UreB (beta) and UreC (alpha) subunits. Three heterotrimers associate to form the active enzyme.

It is found in the cytoplasm. It catalyses the reaction urea + 2 H2O + H(+) = hydrogencarbonate + 2 NH4(+). It functions in the pathway nitrogen metabolism; urea degradation; CO(2) and NH(3) from urea (urease route): step 1/1. The protein is Urease subunit beta of Methylocella silvestris (strain DSM 15510 / CIP 108128 / LMG 27833 / NCIMB 13906 / BL2).